The primary structure comprises 274 residues: 3-methyl-2-oxobutanoate hydroxymethyltransferase (274 aa).

Residues aspartate 49 and aspartate 88 each coordinate Mg(2+). Residues 49–50 (DS), aspartate 88, and lysine 118 contribute to the 3-methyl-2-oxobutanoate site. Glutamate 120 contributes to the Mg(2+) binding site. Glutamate 187 acts as the Proton acceptor in catalysis.

This sequence belongs to the PanB family. As to quaternary structure, homodecamer; pentamer of dimers. Mg(2+) serves as cofactor.

Its subcellular location is the cytoplasm. It catalyses the reaction 3-methyl-2-oxobutanoate + (6R)-5,10-methylene-5,6,7,8-tetrahydrofolate + H2O = 2-dehydropantoate + (6S)-5,6,7,8-tetrahydrofolate. It functions in the pathway cofactor biosynthesis; (R)-pantothenate biosynthesis; (R)-pantoate from 3-methyl-2-oxobutanoate: step 1/2. Catalyzes the reversible reaction in which hydroxymethyl group from 5,10-methylenetetrahydrofolate is transferred onto alpha-ketoisovalerate to form ketopantoate. The chain is 3-methyl-2-oxobutanoate hydroxymethyltransferase from Rhodopseudomonas palustris (strain BisB5).